A 360-amino-acid polypeptide reads, in one-letter code: Phospho-N-acetylmuramoyl-pentapeptide-transferase (360 aa).

Transmembrane regions (helical) follow at residues 27–47, 70–90, 98–118, 134–154, 168–188, 199–219, 239–259, 263–283, 288–308, and 337–357; these read GALF…ISLL, GTPT…ILLW, VWVT…DDYL, LLLE…YSPA, TLLN…VGAG, GLAI…AYLV, LAVV…FNAP, IFMG…IAVA, IVLA…IIQV, and QVVI…LATL.

The protein belongs to the glycosyltransferase 4 family. MraY subfamily. Requires Mg(2+) as cofactor.

The protein localises to the cell inner membrane. It carries out the reaction UDP-N-acetyl-alpha-D-muramoyl-L-alanyl-gamma-D-glutamyl-meso-2,6-diaminopimeloyl-D-alanyl-D-alanine + di-trans,octa-cis-undecaprenyl phosphate = di-trans,octa-cis-undecaprenyl diphospho-N-acetyl-alpha-D-muramoyl-L-alanyl-D-glutamyl-meso-2,6-diaminopimeloyl-D-alanyl-D-alanine + UMP. The protein operates within cell wall biogenesis; peptidoglycan biosynthesis. Its function is as follows. Catalyzes the initial step of the lipid cycle reactions in the biosynthesis of the cell wall peptidoglycan: transfers peptidoglycan precursor phospho-MurNAc-pentapeptide from UDP-MurNAc-pentapeptide onto the lipid carrier undecaprenyl phosphate, yielding undecaprenyl-pyrophosphoryl-MurNAc-pentapeptide, known as lipid I. In Methylorubrum extorquens (strain CM4 / NCIMB 13688) (Methylobacterium extorquens), this protein is Phospho-N-acetylmuramoyl-pentapeptide-transferase.